Reading from the N-terminus, the 155-residue chain is Transcription antitermination protein NusB (155 aa).

Belongs to the NusB family.

Its function is as follows. Involved in transcription antitermination. Required for transcription of ribosomal RNA (rRNA) genes. Binds specifically to the boxA antiterminator sequence of the ribosomal RNA (rrn) operons. In Aliivibrio fischeri (strain ATCC 700601 / ES114) (Vibrio fischeri), this protein is Transcription antitermination protein NusB.